We begin with the raw amino-acid sequence, 402 residues long: Flavohemoprotein (402 aa).

In terms of domain architecture, Globin spans 1–138 (MLSPEVRALV…LADLLIGRER (138 aa)). His85 contributes to the heme b binding site. Residues Tyr95 and Glu137 each act as charge relay system in the active site. The segment at 149 to 402 (GGWTGWRAFK…AEVFGTGGVA (254 aa)) is reductase. Residues 152-261 (TGWRAFKVVR…SPPQGDFTLD (110 aa)) enclose the FAD-binding FR-type domain. FAD-binding positions include Tyr190 and 206–209 (RQYS). 274–279 (GVGLTP) lines the NADP(+) pocket. FAD is bound at residue 395–398 (VFGT).

It belongs to the globin family. Two-domain flavohemoproteins subfamily. The protein in the C-terminal section; belongs to the flavoprotein pyridine nucleotide cytochrome reductase family. Requires heme b as cofactor. The cofactor is FAD.

It catalyses the reaction 2 nitric oxide + NADPH + 2 O2 = 2 nitrate + NADP(+) + H(+). The enzyme catalyses 2 nitric oxide + NADH + 2 O2 = 2 nitrate + NAD(+) + H(+). In terms of biological role, is involved in NO detoxification in an aerobic process, termed nitric oxide dioxygenase (NOD) reaction that utilizes O(2) and NAD(P)H to convert NO to nitrate, which protects the bacterium from various noxious nitrogen compounds. Therefore, plays a central role in the inducible response to nitrosative stress. The chain is Flavohemoprotein from Bordetella bronchiseptica (strain ATCC BAA-588 / NCTC 13252 / RB50) (Alcaligenes bronchisepticus).